Here is a 1053-residue protein sequence, read N- to C-terminus: Putative ABC transporter C family member 15 (1053 aa).

The ABC transmembrane type-1 1 domain occupies 1–180 (MSVDVQRITD…LPDLLSALVQ (180 aa)). 4 helical membrane passes run 11-31 (FIWY…AIYI), 36-56 (LGLG…CNYP), 125-145 (FILW…CMLM), and 151-171 (AGAV…IFGL). In terms of domain architecture, ABC transporter 1 spans 214–437 (VEIENGAFSW…NIGFEVLTQC (224 aa)). 249–256 (GAVGSGKS) lines the ATP pocket. 5 helical membrane passes run 481-503 (LLVP…SNYW), 523-543 (ILLV…ARTI), 595-615 (MAVK…TIFV), 714-734 (LSHF…EGVI), and 738-758 (IAGL…TVIW). The ABC transmembrane type-1 2 domain occupies 483–765 (VPFIILAQSC…VIWNICNAEN (283 aa)). One can recognise an ABC transporter 2 domain in the interval 804–1036 (FRDLQVRYAE…EDSFFSKLIK (233 aa)). 836–843 (GRTGSGKS) contributes to the ATP binding site.

Belongs to the ABC transporter superfamily. ABCC family. Conjugate transporter (TC 3.A.1.208) subfamily.

Its subcellular location is the membrane. It catalyses the reaction ATP + H2O + xenobioticSide 1 = ADP + phosphate + xenobioticSide 2.. Pump for glutathione S-conjugates. The protein is Putative ABC transporter C family member 15 (ABCC15) of Arabidopsis thaliana (Mouse-ear cress).